Reading from the N-terminus, the 536-residue chain is CTP synthase (536 aa).

The segment at 1 to 268 is amidoligase domain; that stretch reads MSFKSIFLTG…VDFLLSKFGF (268 aa). Ser14 contributes to the CTP binding site. Ser14 contributes to the UTP binding site. 15-20 contributes to the ATP binding site; sequence SLGKGL. Tyr55 lines the L-glutamine pocket. An ATP-binding site is contributed by Asp72. 2 residues coordinate Mg(2+): Asp72 and Glu142. Residues 149–151, 188–193, and Lys224 contribute to the CTP site; these read DIE and KTKPTQ. UTP is bound by residues 188-193 and Lys224; that span reads KTKPTQ. One can recognise a Glutamine amidotransferase type-1 domain in the interval 294 to 532; sequence RIGLVGKYLE…LSAALDYSLE (239 aa). An L-glutamine-binding site is contributed by Gly353. Cys380 (nucleophile; for glutamine hydrolysis) is an active-site residue. L-glutamine is bound by residues 381–384, Glu404, and Arg460; that span reads LGMQ. Active-site residues include His505 and Glu507.

The protein belongs to the CTP synthase family. In terms of assembly, homotetramer.

It catalyses the reaction UTP + L-glutamine + ATP + H2O = CTP + L-glutamate + ADP + phosphate + 2 H(+). The enzyme catalyses L-glutamine + H2O = L-glutamate + NH4(+). It carries out the reaction UTP + NH4(+) + ATP = CTP + ADP + phosphate + 2 H(+). It functions in the pathway pyrimidine metabolism; CTP biosynthesis via de novo pathway; CTP from UDP: step 2/2. With respect to regulation, allosterically activated by GTP, when glutamine is the substrate; GTP has no effect on the reaction when ammonia is the substrate. The allosteric effector GTP functions by stabilizing the protein conformation that binds the tetrahedral intermediate(s) formed during glutamine hydrolysis. Inhibited by the product CTP, via allosteric rather than competitive inhibition. Catalyzes the ATP-dependent amination of UTP to CTP with either L-glutamine or ammonia as the source of nitrogen. Regulates intracellular CTP levels through interactions with the four ribonucleotide triphosphates. The protein is CTP synthase of Chlamydia muridarum (strain MoPn / Nigg).